The primary structure comprises 820 residues: Nuclear pore complex protein Nup93 (820 aa).

It belongs to the nucleoporin interacting component (NIC) family.

The protein localises to the nucleus membrane. The protein resides in the nucleus. It localises to the nuclear pore complex. Plays a role in the nuclear pore complex (NPC) assembly and/or maintenance. The polypeptide is Nuclear pore complex protein Nup93 (dye) (Danio rerio (Zebrafish)).